A 113-amino-acid chain; its full sequence is Na(+)/H(+) antiporter subunit C (113 aa).

3 consecutive transmembrane segments (helical) span residues 4 to 21 (LMAVLAGIIFMAATYLLL), 28 to 47 (VIIGTALLSHGVHLMLLTMG), and 67 to 89 (PLPQALILTAIVISFGVTSFILV).

It belongs to the CPA3 antiporters (TC 2.A.63) subunit C family. In terms of assembly, forms a heterooligomeric complex that consists of seven subunits: MrpA, MrpB, MrpC, MrpD, MrpE, MrpF and MrpG.

The protein resides in the cell membrane. Functionally, mrp complex is a Na(+)/H(+) antiporter that is considered to be the major Na(+) excretion system in B.subtilis. Has a major role in Na(+) resistance and a minor role in Na(+)- and K(+)-dependent pH homeostasis as compared to TetB. MrpA may be the actual Na(+)/H(+) antiporter, although the six other Mrp proteins are all required for Na(+)/H(+) antiport activity and Na(+) resistance. MrpA is required for initiation of sporulation when external Na(+) concentration increases. Also transports Li(+) but not K(+), Ca(2+) or Mg(2+). This Bacillus subtilis (strain 168) protein is Na(+)/H(+) antiporter subunit C (mrpC).